Consider the following 528-residue polypeptide: OLD nuclease (528 aa).

The tract at residues 1–153 (MLKRLQVKNF…LAQHLPSIRG (153 aa)) is ATPase domain N-terminus. 31–35 (GAGKT) is a binding site for ATP. The dimerization domain stretch occupies residues 154 to 245 (SILGRLLQPV…RESDLTLPGD (92 aa)). The interval 246–369 (ELGLGIQSAI…FDTARNEVLF (124 aa)) is ATPase domain C-terminus. The interval 370 to 528 (AKRALLVEGY…IRQVTRPMEE (159 aa)) is toprim domain. A divalent metal cation is bound by residues glutamate 377, aspartate 381, aspartate 431, and aspartate 433. Positions 440–461 (RADEETRRKQEQENKAEQEKNQ) are disordered. Serine 478 and glutamate 480 together coordinate a divalent metal cation. Arginine 487 serves as the catalytic Stabilizes transition state or protonates leaving group.

The protein belongs to the class 1 OLD nuclease family. As to quaternary structure, homodimer. Requires Mg(2+) as cofactor. The cofactor is Mn(2+). Ca(2+) serves as cofactor.

It catalyses the reaction Exonucleolytic cleavage in the 5'- to 3'-direction to yield nucleoside 5'-phosphates.. Its function is as follows. An exodeoxyribonuclease that degrades linear or supercoiled dsDNA from 5'-3'. Nicks and linearizes circular DNA. Activity is not stimulated by ATP or AMP-PNP, although it has DNA-stimulated ATPase activity. This Thermus scotoductus (strain ATCC 700910 / SA-01) protein is OLD nuclease.